Reading from the N-terminus, the 118-residue chain is DNA-binding protein inhibitor ID-3-A (118 aa).

One can recognise a bHLH domain in the interval 32 to 84 (SHKGPGMDEPMGLLYDMNGCYSKLKELVPGIPQGSKLSQVEILQHVIDYIFDL).

In terms of assembly, homodimer. Heterodimer with other HLH proteins. Interacts (via HLH domain) with the bHLH protein hes4/hairy2 (via Orange domain). Interacts with stat3. In terms of tissue distribution, at gastrula stage, expressed in all three germ layers, but becomes localized to discrete domains of the developing nervous system during neurulation, including the anterior neural plate, cement gland, eye anlagen, otic placode and both cranial and trunk premigratory and early migratory neural crest cells. Also expressed in the most dorsal and ventral portions of the myotome, the developing heart and anterior blood islets, and in the tail fin mesenchyme. Expressed at a low level in limbs, with expression decreasing as limbs develop, but expressed at a high level in blastemas (regenerated limbs), where expression is localized to both the blastermal epidermis and mesenchyme. Widely expressed in adults including the liver and heart.

The protein localises to the nucleus. In terms of biological role, transcriptional regulator (lacking a basic DNA binding domain) which negatively regulates the basic helix-loop-helix (bHLH) transcription factors by forming heterodimers and inhibiting their DNA binding and transcriptional activity. Influences cell fate decisions in the embryo by sequestering and blocking the activity of the bHLH transcription factors that control these decisions. Inhibits the binding of myogenic bHLH-containing complexes to E-box DNA, thereby preventing activation of muscle-specific target genes. Also inhibits the activity of neurogenic factor neurod1/neuroD. Plays a role in cell cycle progression and survival of neural crest progenitors; binding to either hes4-B/hairy2b or stat3 blocks the formation of transcription factor complexes and the repressor function of hes4-B/hairy2B, to allow neural crest progenitors to differentiate. May play a role in the regulation of the circadian rhythm. This Xenopus laevis (African clawed frog) protein is DNA-binding protein inhibitor ID-3-A (id3-a).